We begin with the raw amino-acid sequence, 146 residues long: Hemoglobin subunit beta-1 (146 aa).

Positions 2 to 146 constitute a Globin domain; that stretch reads HWTAEEKQLI…VAHALARRYH (145 aa). Positions 63 and 92 each coordinate heme b.

The protein belongs to the globin family. In terms of assembly, heterotetramer of two alpha chains and two beta chains. Red blood cells.

Its function is as follows. Involved in oxygen transport from the lung to the various peripheral tissues. The polypeptide is Hemoglobin subunit beta-1 (HBB1) (Iguana iguana (Common iguana)).